The sequence spans 340 residues: MNNQFEGRSFLKEIDYTPTELAYLIDFASHLKTLKAHHIPHPYLQGKNIALLFEKTSTRTRSAFTVAANDLGANPEFLCKDDIQFGTKESVVDTAKVLGSMYDGIEFRGFKQSTVEDLATYSGVPVWNGLTDEWHPTQILADFLTLKEHFGHLKGLTLAYVGDGRNNMANSLLVAGAMLGINIAIGSPVALQPAPAVVALAQQYAQAAGSTVVITADPQQAVTQADALYTDVWVSMGEQVDYGERIKQLLPFQINTALLAATGKSSTIVMHCLPALHDLKTQLGAKLGEQYGMTAFEITDDVFQSKQEVVFEEAGNRMPAIKAVMAATLGNLFIPTSIFN.

Carbamoyl phosphate is bound by residues 57–60, Gln-84, Arg-108, and 135–138; these read STRT and HPTQ. Residues Asn-167, Asp-231, and 235-236 contribute to the L-ornithine site; that span reads SM. Residues 272–273 and Arg-317 contribute to the carbamoyl phosphate site; that span reads CL.

The protein belongs to the aspartate/ornithine carbamoyltransferase superfamily. OTCase family.

It localises to the cytoplasm. The enzyme catalyses carbamoyl phosphate + L-ornithine = L-citrulline + phosphate + H(+). The protein operates within amino-acid biosynthesis; L-arginine biosynthesis; L-arginine from L-ornithine and carbamoyl phosphate: step 1/3. Its function is as follows. Reversibly catalyzes the transfer of the carbamoyl group from carbamoyl phosphate (CP) to the N(epsilon) atom of ornithine (ORN) to produce L-citrulline. The polypeptide is Ornithine carbamoyltransferase (argF) (Lactiplantibacillus plantarum (strain ATCC BAA-793 / NCIMB 8826 / WCFS1) (Lactobacillus plantarum)).